A 490-amino-acid polypeptide reads, in one-letter code: Bifunctional protein HldE (490 aa).

The tract at residues 1 to 330 (MERKEIESLF…AEIGHAHPDS (330 aa)) is ribokinase. 205–208 (NRKE) contacts ATP. The active site involves aspartate 275. Residues 356-490 (FTNGCFDLLH…EKIRTGSIKE (135 aa)) are cytidylyltransferase.

In the N-terminal section; belongs to the carbohydrate kinase PfkB family. The protein in the C-terminal section; belongs to the cytidylyltransferase family. In terms of assembly, homodimer.

The enzyme catalyses D-glycero-beta-D-manno-heptose 7-phosphate + ATP = D-glycero-beta-D-manno-heptose 1,7-bisphosphate + ADP + H(+). The catalysed reaction is D-glycero-beta-D-manno-heptose 1-phosphate + ATP + H(+) = ADP-D-glycero-beta-D-manno-heptose + diphosphate. It functions in the pathway nucleotide-sugar biosynthesis; ADP-L-glycero-beta-D-manno-heptose biosynthesis; ADP-L-glycero-beta-D-manno-heptose from D-glycero-beta-D-manno-heptose 7-phosphate: step 1/4. Its pathway is nucleotide-sugar biosynthesis; ADP-L-glycero-beta-D-manno-heptose biosynthesis; ADP-L-glycero-beta-D-manno-heptose from D-glycero-beta-D-manno-heptose 7-phosphate: step 3/4. In terms of biological role, catalyzes the phosphorylation of D-glycero-D-manno-heptose 7-phosphate at the C-1 position to selectively form D-glycero-beta-D-manno-heptose-1,7-bisphosphate. Functionally, catalyzes the ADP transfer from ATP to D-glycero-beta-D-manno-heptose 1-phosphate, yielding ADP-D-glycero-beta-D-manno-heptose. The protein is Bifunctional protein HldE of Geotalea uraniireducens (strain Rf4) (Geobacter uraniireducens).